Consider the following 198-residue polypeptide: Large ribosomal subunit protein uL13 (198 aa).

The protein belongs to the universal ribosomal protein uL13 family.

The protein is Large ribosomal subunit protein uL13 (RPL13A) of Tetrahymena thermophila (strain SB210).